The primary structure comprises 335 residues: Ubiquinone biosynthesis protein COQ4, mitochondrial (335 aa).

A mitochondrion-targeting transit peptide spans 1 to 10; that stretch reads MLRLSLLRST. Zn(2+)-binding residues include H210, D211, H214, and E226.

This sequence belongs to the COQ4 family. In terms of assembly, component of a multi-subunit COQ enzyme complex, composed of at least COQ3, COQ4, COQ5, COQ6, COQ7 and COQ9. Interacts with COQ3. The cofactor is Zn(2+).

The protein localises to the mitochondrion inner membrane. It catalyses the reaction 4-hydroxy-3-methoxy-5-(all-trans-hexaprenyl)benzoate + H(+) = 2-methoxy-6-(all-trans-hexaprenyl)phenol + CO2. Its pathway is cofactor biosynthesis; ubiquinone biosynthesis. Its function is as follows. Lyase that catalyzes the C1-decarboxylation of 4-hydroxy-3-methoxy-5-(all-trans-hexaprenyl)benzoic acid into 2-methoxy-6-(all-trans-hexaprenyl)phenol during ubiquinone biosynthesis. The protein is Ubiquinone biosynthesis protein COQ4, mitochondrial of Saccharomyces cerevisiae (strain RM11-1a) (Baker's yeast).